The chain runs to 360 residues: Arginase, non-hepatic 1 (360 aa).

Mn(2+)-binding residues include His-122, Asp-145, His-147, and Asp-149. Residues 147-151 (HADIN), 158-160 (SGN), and Asp-204 contribute to the substrate site. Mn(2+)-binding residues include Asp-253 and Asp-255. Residues Thr-267 and Glu-298 each coordinate substrate.

It belongs to the arginase family. Homotrimer. Requires Mn(2+) as cofactor. Expressed at differing tadpole stages in tail, intestine, hindlimb and trunk region. Most abundant in tadpole tail.

The enzyme catalyses L-arginine + H2O = urea + L-ornithine. Its pathway is nitrogen metabolism; urea cycle; L-ornithine and urea from L-arginine: step 1/1. Its function is as follows. As well as its role in the urea cycle, may be involved in tissue remodeling. The protein is Arginase, non-hepatic 1 (arg2-a) of Xenopus laevis (African clawed frog).